The primary structure comprises 242 residues: Probable transcriptional regulatory protein MHP7448_0474 (242 aa).

It belongs to the TACO1 family.

It localises to the cytoplasm. This Mesomycoplasma hyopneumoniae (strain 7448) (Mycoplasma hyopneumoniae) protein is Probable transcriptional regulatory protein MHP7448_0474.